Here is a 127-residue protein sequence, read N- to C-terminus: Small ribosomal subunit protein eS8 (127 aa).

The interval 1–33 (MAIWQGKSMKKPSGGRAKMNRGKRKYELGREPA) is disordered.

Belongs to the eukaryotic ribosomal protein eS8 family. Part of the 30S ribosomal subunit.

This is Small ribosomal subunit protein eS8 (rps8e) from Methanothermobacter thermautotrophicus (strain ATCC 29096 / DSM 1053 / JCM 10044 / NBRC 100330 / Delta H) (Methanobacterium thermoautotrophicum).